Consider the following 394-residue polypeptide: MAKEKFERSKPHVNVGTIGHVDHGKTTLTAALTTILAKKFGGAAKAYDQIDNAPEEKARGITINTSHVEYETETRHYAHVDCPGHADYVKNMITGAAQMDGAILVCSAADGPMPQTREHILLARQVGVPYIIVFMNKCDMVDDAELLELVEMEIRDLLSSYDFPGDDCPIVQGSALKALEGDAAYEEKIFELAAALDSYIPTPERAVDKPFLLPIEDVFSISGRGTVVTGRVERGIIHVGDEIEIVGLKETQKTTCTGVEMFRKLLDEGQAGDNVGVLLRGTKREDVERGQVLAKPGTITPHTKFKAEVYVLSKEEGGRHTPFFANYRPQFYFRTTDVTGAVTLEEGVEMVMPGENVTITVELIAPIAMEEGLRFAIREGGRTVGAGVVSSVIA.

The tr-type G domain occupies 10-204 (KPHVNVGTIG…ALDSYIPTPE (195 aa)). The G1 stretch occupies residues 19–26 (GHVDHGKT). 19 to 26 (GHVDHGKT) contacts GTP. Thr-26 serves as a coordination point for Mg(2+). Residues 60 to 64 (GITIN) are G2. The interval 81–84 (DCPG) is G3. GTP-binding positions include 81-85 (DCPGH) and 136-139 (NKCD). Residues 136–139 (NKCD) are G4. The G5 stretch occupies residues 174 to 176 (SAL).

The protein belongs to the TRAFAC class translation factor GTPase superfamily. Classic translation factor GTPase family. EF-Tu/EF-1A subfamily. As to quaternary structure, monomer.

It is found in the cytoplasm. The enzyme catalyses GTP + H2O = GDP + phosphate + H(+). In terms of biological role, GTP hydrolase that promotes the GTP-dependent binding of aminoacyl-tRNA to the A-site of ribosomes during protein biosynthesis. The sequence is that of Elongation factor Tu from Neisseria meningitidis serogroup A / serotype 4A (strain DSM 15465 / Z2491).